The primary structure comprises 103 residues: Large ribosomal subunit protein bL21 (103 aa).

The protein belongs to the bacterial ribosomal protein bL21 family. In terms of assembly, part of the 50S ribosomal subunit. Contacts protein L20.

This protein binds to 23S rRNA in the presence of protein L20. This Mycobacterium leprae (strain Br4923) protein is Large ribosomal subunit protein bL21.